We begin with the raw amino-acid sequence, 368 residues long: tRNA-specific 2-thiouridylase MnmA (368 aa).

ATP contacts are provided by residues 11–18 (GMSGGVDS) and M37. Residues 97–99 (NPD) are interaction with target base in tRNA. C102 functions as the Nucleophile in the catalytic mechanism. A disulfide bridge connects residues C102 and C199. Residue G127 participates in ATP binding. The segment at 149–151 (KDQ) is interaction with tRNA. The Cysteine persulfide intermediate role is filled by C199. Residues 311 to 312 (RY) are interaction with tRNA.

Belongs to the MnmA/TRMU family. As to quaternary structure, interacts with TusE.

It is found in the cytoplasm. It catalyses the reaction S-sulfanyl-L-cysteinyl-[protein] + uridine(34) in tRNA + AH2 + ATP = 2-thiouridine(34) in tRNA + L-cysteinyl-[protein] + A + AMP + diphosphate + H(+). In terms of biological role, catalyzes the 2-thiolation of uridine at the wobble position (U34) of tRNA(Lys), tRNA(Glu) and tRNA(Gln), leading to the formation of s(2)U34, the first step of tRNA-mnm(5)s(2)U34 synthesis. Sulfur is provided by IscS, via a sulfur-relay system. Binds ATP and its substrate tRNAs. The chain is tRNA-specific 2-thiouridylase MnmA from Escherichia coli O157:H7.